Reading from the N-terminus, the 149-residue chain is Placenta growth factor (149 aa).

The N-terminal stretch at 1-18 (MPTVRLFTCFLQLLTGLV) is a signal peptide. N-linked (GlcNAc...) asparagine glycosylation occurs at N33. Cystine bridges form between C52-C94, C83-C128, and C87-C130. N101 carries N-linked (GlcNAc...) asparagine glycosylation.

Belongs to the PDGF/VEGF growth factor family. Antiparallel homodimer; disulfide-linked. Also found as heterodimer with VEGFA/VEGF.

Its subcellular location is the secreted. Its function is as follows. Growth factor active in angiogenesis and endothelial cell growth, stimulating their proliferation and migration. It binds to the receptor FLT1/VEGFR-1. Also promotes cell tumor growth. The protein is Placenta growth factor (PGF) of Bos taurus (Bovine).